A 389-amino-acid polypeptide reads, in one-letter code: Very-long-chain 3-oxoacyl-CoA reductase (389 aa).

The chain crosses the membrane as a helical span at residues 34–54; sequence IAVFLLAIGLFHVALKVVSYV. NADP(+)-binding residues include valine 80, aspartate 134, asparagine 162, tyrosine 239, lysine 243, valine 272, and serine 274. The active-site Proton donor is the tyrosine 239. The Lowers pKa of active site Tyr role is filled by lysine 243. The segment at 359–389 is disordered; sequence QAAGGVADPKNTTAAREGYATESLKNETLKH.

It belongs to the short-chain dehydrogenases/reductases (SDR) family.

The protein localises to the endoplasmic reticulum membrane. The enzyme catalyses a very-long-chain (3R)-3-hydroxyacyl-CoA + NADP(+) = a very-long-chain 3-oxoacyl-CoA + NADPH + H(+). The protein operates within lipid metabolism; fatty acid biosynthesis. Component of the microsomal membrane bound fatty acid elongation system, which produces the 26-carbon very long-chain fatty acids (VLCFA) from palmitate. Catalyzes the reduction of the 3-ketoacyl-CoA intermediate that is formed in each cycle of fatty acid elongation. VLCFAs serve as precursors for ceramide and sphingolipids. The sequence is that of Very-long-chain 3-oxoacyl-CoA reductase from Yarrowia lipolytica (strain CLIB 122 / E 150) (Yeast).